Here is a 311-residue protein sequence, read N- to C-terminus: Malate dehydrogenase (311 aa).

NAD(+) contacts are provided by residues 7 to 13 (GAAGGIG) and Asp-34. 2 residues coordinate substrate: Arg-81 and Arg-87. NAD(+) contacts are provided by residues Asn-94 and 117 to 119 (ITN). Substrate is bound by residues Asn-119 and Arg-153. His-177 acts as the Proton acceptor in catalysis. Met-227 provides a ligand contact to NAD(+).

It belongs to the LDH/MDH superfamily. MDH type 1 family. As to quaternary structure, homodimer.

It catalyses the reaction (S)-malate + NAD(+) = oxaloacetate + NADH + H(+). In terms of biological role, catalyzes the reversible oxidation of malate to oxaloacetate. In Histophilus somni (strain 129Pt) (Haemophilus somnus), this protein is Malate dehydrogenase.